Reading from the N-terminus, the 277-residue chain is Shikimate dehydrogenase (NADP(+)) (277 aa).

Shikimate-binding positions include 15–17 (SLS) and Thr-62. Lys-66 functions as the Proton acceptor in the catalytic mechanism. 2 residues coordinate shikimate: Asn-87 and Asp-102. Residues 127-131 (GAGGA), 151-156 (NRTRDK), and Ile-219 each bind NADP(+). Position 221 (Tyr-221) interacts with shikimate. Gly-242 contributes to the NADP(+) binding site.

This sequence belongs to the shikimate dehydrogenase family. Homodimer.

It catalyses the reaction shikimate + NADP(+) = 3-dehydroshikimate + NADPH + H(+). The protein operates within metabolic intermediate biosynthesis; chorismate biosynthesis; chorismate from D-erythrose 4-phosphate and phosphoenolpyruvate: step 4/7. In terms of biological role, involved in the biosynthesis of the chorismate, which leads to the biosynthesis of aromatic amino acids. Catalyzes the reversible NADPH linked reduction of 3-dehydroshikimate (DHSA) to yield shikimate (SA). This Bacillus mycoides (strain KBAB4) (Bacillus weihenstephanensis) protein is Shikimate dehydrogenase (NADP(+)).